Consider the following 175-residue polypeptide: R-phycoerythrin subunit beta (175 aa).

Cysteine 82 is a (2R,3E)-phycoerythrobilin binding site.

This sequence belongs to the phycobiliprotein family. In terms of assembly, homodimer. Post-translationally, contains one covalently linked phycoerythrobilin chromophore.

Its function is as follows. Green-light absorbing phycoerythrin of unknown function. This Prochlorococcus marinus subsp. pastoris (strain CCMP1986 / NIES-2087 / MED4) protein is R-phycoerythrin subunit beta (cpeB).